Reading from the N-terminus, the 194-residue chain is Holliday junction branch migration complex subunit RuvA (194 aa).

The segment at 1-64 (MIGRITGLLL…EDVHLLFGFM (64 aa)) is domain I. The tract at residues 65 to 140 (TEQERALFRQ…KIDPVAILSE (76 aa)) is domain II. Residues 140 to 143 (EAGA) form a flexible linker region. Residues 144-194 (AASNVDKDILSALLALGYNGREVNRALEQLSEGVTVSDGIMQSLKFLSKVK) are domain III.

This sequence belongs to the RuvA family. Homotetramer. Forms an RuvA(8)-RuvB(12)-Holliday junction (HJ) complex. HJ DNA is sandwiched between 2 RuvA tetramers; dsDNA enters through RuvA and exits via RuvB. An RuvB hexamer assembles on each DNA strand where it exits the tetramer. Each RuvB hexamer is contacted by two RuvA subunits (via domain III) on 2 adjacent RuvB subunits; this complex drives branch migration. In the full resolvosome a probable DNA-RuvA(4)-RuvB(12)-RuvC(2) complex forms which resolves the HJ.

The protein localises to the cytoplasm. In terms of biological role, the RuvA-RuvB-RuvC complex processes Holliday junction (HJ) DNA during genetic recombination and DNA repair, while the RuvA-RuvB complex plays an important role in the rescue of blocked DNA replication forks via replication fork reversal (RFR). RuvA specifically binds to HJ cruciform DNA, conferring on it an open structure. The RuvB hexamer acts as an ATP-dependent pump, pulling dsDNA into and through the RuvAB complex. HJ branch migration allows RuvC to scan DNA until it finds its consensus sequence, where it cleaves and resolves the cruciform DNA. This is Holliday junction branch migration complex subunit RuvA from Nitrosomonas eutropha (strain DSM 101675 / C91 / Nm57).